The sequence spans 303 residues: Small ribosomal subunit protein uS2 (303 aa).

The interval 258–303 (ATLRENAVVTENEVKKTDEEEGASSEAARADAQNEEAVAKPGEEVE) is disordered. Residues 294-303 (AVAKPGEEVE) are compositionally biased toward basic and acidic residues.

Belongs to the universal ribosomal protein uS2 family.

The chain is Small ribosomal subunit protein uS2 from Bifidobacterium animalis subsp. lactis (strain AD011).